The chain runs to 434 residues: Cytochrome b-c1 complex subunit 2, mitochondrial (434 aa).

The transit peptide at 1 to 31 (MYSLNRLPRSAAFKSSANLLRRNASTTSAGG) directs the protein to the mitochondrion.

Belongs to the peptidase M16 family. UQCRC2/QCR2 subfamily. In terms of assembly, component of the ubiquinol-cytochrome c oxidoreductase (cytochrome b-c1 complex, complex III, CIII), a multisubunit enzyme composed of 10 subunits. The complex is composed of 3 respiratory subunits cytochrome b (COB), cytochrome c1 (CYT1) and Rieske protein (RIP1), 2 core protein subunits COR1 and QCR2, and 5 low-molecular weight protein subunits QCR6, QCR7, QCR8, QCR9 and QCR10. The complex exists as an obligatory dimer and forms supercomplexes (SCs) in the inner mitochondrial membrane with a monomer or a dimer of cytochrome c oxidase (complex IV, CIV), resulting in 2 different assemblies (supercomplexes III(2)IV and III(2)IV(2)). Interacts with MRJ1.

The protein localises to the mitochondrion inner membrane. Functionally, component of the ubiquinol-cytochrome c oxidoreductase, a multisubunit transmembrane complex that is part of the mitochondrial electron transport chain which drives oxidative phosphorylation. The respiratory chain contains 3 multisubunit complexes succinate dehydrogenase (complex II, CII), ubiquinol-cytochrome c oxidoreductase (cytochrome b-c1 complex, complex III, CIII) and cytochrome c oxidase (complex IV, CIV), that cooperate to transfer electrons derived from NADH and succinate to molecular oxygen, creating an electrochemical gradient over the inner membrane that drives transmembrane transport and the ATP synthase. The cytochrome b-c1 complex catalyzes electron transfer from ubiquinol to cytochrome c, linking this redox reaction to translocation of protons across the mitochondrial inner membrane, with protons being carried across the membrane as hydrogens on the quinol. In the process called Q cycle, 2 protons are consumed from the matrix, 4 protons are released into the intermembrane space and 2 electrons are passed to cytochrome c. The polypeptide is Cytochrome b-c1 complex subunit 2, mitochondrial (Cryptococcus neoformans var. grubii serotype A (strain H99 / ATCC 208821 / CBS 10515 / FGSC 9487) (Filobasidiella neoformans var. grubii)).